The chain runs to 477 residues: Ribulose bisphosphate carboxylase large chain (477 aa).

Residues 1-2 constitute a propeptide that is removed on maturation; sequence MS. Proline 3 is subject to N-acetylproline. Lysine 14 carries the post-translational modification N6,N6,N6-trimethyllysine. 2 residues coordinate substrate: asparagine 123 and threonine 173. The active-site Proton acceptor is the lysine 175. Substrate is bound at residue lysine 177. Mg(2+) is bound by residues lysine 201, aspartate 203, and glutamate 204. The residue at position 201 (lysine 201) is an N6-carboxylysine. The active-site Proton acceptor is histidine 294. Substrate-binding residues include arginine 295, histidine 327, and serine 379.

It belongs to the RuBisCO large chain family. Type I subfamily. In terms of assembly, heterohexadecamer of 8 large chains and 8 small chains; disulfide-linked. The disulfide link is formed within the large subunit homodimers. It depends on Mg(2+) as a cofactor. The disulfide bond which can form in the large chain dimeric partners within the hexadecamer appears to be associated with oxidative stress and protein turnover.

Its subcellular location is the plastid. It localises to the chloroplast. It carries out the reaction 2 (2R)-3-phosphoglycerate + 2 H(+) = D-ribulose 1,5-bisphosphate + CO2 + H2O. The catalysed reaction is D-ribulose 1,5-bisphosphate + O2 = 2-phosphoglycolate + (2R)-3-phosphoglycerate + 2 H(+). RuBisCO catalyzes two reactions: the carboxylation of D-ribulose 1,5-bisphosphate, the primary event in carbon dioxide fixation, as well as the oxidative fragmentation of the pentose substrate in the photorespiration process. Both reactions occur simultaneously and in competition at the same active site. The sequence is that of Ribulose bisphosphate carboxylase large chain from Nicotiana sylvestris (Wood tobacco).